Consider the following 339-residue polypeptide: MERYEVIKDIGSGNFGVAKLVRDVRTKELFAVKFIERGQKIDENVQREIMNHRSLRHPNIVRFKEVVLTPTHLAIVMEYAAGGELFERICSAGRFSEDEARFFFQQLISGVSYCHSMQICHRDLKLENTLLDGSIAPRLKICDFGYSKSSLLHSQPKSTVGTPAYIAPEVLARKEYDGKVADVWSCGVTLYVMLVGAYPFEDPDEPRNFRKTITRILSVQYMVPDYVRVSMECRHLLSRIFVANPEQRITIPEIKNHPWFLKNLPIEMTDEYQMSVQMNDINTPSQGLEEIMAIIQEARKPGDGSKFSGQIPGLGSMELDDVDTDDIDVEDSGDFVCAL.

One can recognise a Protein kinase domain in the interval 4–260 (YEVIKDIGSG…IPEIKNHPWF (257 aa)). ATP is bound by residues 10 to 18 (IGSGNFGVA) and K33. D123 serves as the catalytic Proton acceptor. A C-terminal region spans residues 253–339 (EIKNHPWFLK…EDSGDFVCAL (87 aa)).

Belongs to the protein kinase superfamily. Ser/Thr protein kinase family. Interacts with BZIP46. Interacts with ABI5 and PP2C30. Interacts with PP2C51. Phosphorylated. Expressed in leaf blades, leaf sheaths and roots. Expressed in shoots and roots of young seedlings.

The protein resides in the cytoplasm. It localises to the nucleus. It carries out the reaction L-seryl-[protein] + ATP = O-phospho-L-seryl-[protein] + ADP + H(+). The catalysed reaction is L-threonyl-[protein] + ATP = O-phospho-L-threonyl-[protein] + ADP + H(+). Its activity is regulated as follows. Activated by phosphorylation in response to hyperosmotic stress within 5 minutes. In terms of biological role, may play a role in signal transduction of hyperosmotic response. Can phosphorylate BZIP46 in vitro. Together with ABI5, PP2C30 and PYL5, is part of an abscisic acid (ABA) signaling unit that modulates seed germination and early seedling growth. This chain is Serine/threonine-protein kinase SAPK2 (SAPK2), found in Oryza sativa subsp. japonica (Rice).